The chain runs to 240 residues: REF/SRPP-like protein At1g67360 (240 aa).

Positions 208–240 (KEDARRKKGGDTAGKKGETTDAADGDKSSSDSE) are disordered.

It belongs to the REF/SRPP family.

This is REF/SRPP-like protein At1g67360 from Arabidopsis thaliana (Mouse-ear cress).